The chain runs to 944 residues: Respiratory burst oxidase homolog protein F (944 aa).

The Cytoplasmic portion of the chain corresponds to 2–387; it reads KPFSKNDRRR…VYIMQENWKR (386 aa). Coiled coils occupy residues 102 to 126 and 157 to 184; these read QFSQ…KRFS and LEAR…RGLR. 2 EF-hand-like regions span residues 207–215 and 241–252; these read EKNGYIYRS and RRLKVEKINHDE. EF-hand domains lie at 264–299 and 308–343; these read SFDS…SASA and QAEE…KDTY. Positions 277, 279, 281, 283, 288, 321, and 327 each coordinate Ca(2+). Phosphoserine is present on residues Ser354 and Ser358. The helical transmembrane segment at 388–408 threads the bilayer; the sequence is IWVLSLWIMIMIGLFLWKFFQ. The Extracellular portion of the chain corresponds to 409-475; the sequence is YKQKDAFHVM…INFHKTIAGA (67 aa). The region spanning 426–583 is the Ferric oxidoreductase domain; it reads KGAAETLKFN…LFVIVYILLI (158 aa). A helical transmembrane segment spans residues 476–492; that stretch reads IVVAVILHIGDHLACDF. The Cytoplasmic segment spans residues 493 to 527; that stretch reads PRIVRATEYDYNRYLFHYFQTKQPTYFDLVKGPEG. The chain crosses the membrane as a helical span at residues 528–548; sequence ITGILMVILMIISFTLATRWF. Residues 549-570 lie on the Extracellular side of the membrane; it reads RRNLVKLPKPFDRLTGFNAFWY. Residues 571–591 traverse the membrane as a helical segment; it reads SHHLFVIVYILLILHGIFLYF. The Cytoplasmic segment spans residues 592-599; that stretch reads AKPWYVRT. A helical transmembrane segment spans residues 600–617; that stretch reads TWMYLAVPVLLYGGERTL. Topologically, residues 618–744 are extracellular; it reads RYFRSGSYSV…PYGAPAQDYR (127 aa). The FAD-binding FR-type domain occupies 622 to 742; it reads SGSYSVRLLK…DGPYGAPAQD (121 aa). A helical membrane pass occupies residues 745–765; the sequence is KYDVLLLVGLGIGATPFISIL. The Cytoplasmic portion of the chain corresponds to 766-944; the sequence is KDLLNNIVKM…TKFEFHKEHF (179 aa).

The protein belongs to the RBOH (TC 5.B.1.3) family. Monomer and homodimer. Interacts (via N-terminus) with CIPK26. Interacts (via N-terminus) with SRC2. Post-translationally, not glycosylated. Phosphorylated by CIPK26. As to expression, expressed in roots, stems, seedlings, inflorescences, leaves and guard cells.

The protein resides in the cell membrane. Its activity is regulated as follows. Inhibited by diphenylene iodonium (DPI). Functionally, calcium-dependent NADPH oxidase that generates superoxide. Generates reactive oxygen species (ROS) during incompatible interactions with pathogens and is important in the regulation of the hypersensitive response (HR). Involved in abscisic acid-induced stomatal closing and in UV-B and abscisic acid ROS-dependent signaling. In Arabidopsis thaliana (Mouse-ear cress), this protein is Respiratory burst oxidase homolog protein F (RBOHF).